The sequence spans 362 residues: E3 ubiquitin-protein ligase TM129 (362 aa).

The Lumenal segment spans residues 1-6 (MDSPEV). The helical transmembrane segment at 7 to 27 (TFTLAYLVFAVCFVFTPNEFY) threads the bilayer. Residues 28 to 56 (SAGLTVQNLLSGWLGSEDAAFVPYHLRRT) are Cytoplasmic-facing. Residues 57 to 77 (SATLLCHSLLPLGYYMGMCFA) form a helical membrane-spanning segment. Residues 78–94 (ASEKQLYSPGQAPEAWQ) are Lumenal-facing. A helical membrane pass occupies residues 95-115 (LFLLLAVTLPLLSCTLIYYWS). The Cytoplasmic segment spans residues 116 to 362 (WDRWTRHPLA…FCILDVCCVR (247 aa)). The RING-type; degenerate zinc finger occupies 285-350 (CIGCMQTRAS…ASRVPCPTCR (66 aa)).

The protein belongs to the TMEM129 family. In terms of assembly, integral component of ER-resident dislocation complexes.

It localises to the endoplasmic reticulum membrane. The enzyme catalyses S-ubiquitinyl-[E2 ubiquitin-conjugating enzyme]-L-cysteine + [acceptor protein]-L-lysine = [E2 ubiquitin-conjugating enzyme]-L-cysteine + N(6)-ubiquitinyl-[acceptor protein]-L-lysine.. It functions in the pathway protein modification; protein ubiquitination. Functionally, E3 ubiquitin-protein ligase involved in ER-associated protein degradation, preferentially associates with the E2 enzyme UBE2J2. Exploited by viral US11 proteins to mediate HLA class I proteins degradation. The chain is E3 ubiquitin-protein ligase TM129 (Tmem129) from Mus musculus (Mouse).